Reading from the N-terminus, the 89-residue chain is Small ribosomal subunit protein uS15 (89 aa).

It belongs to the universal ribosomal protein uS15 family. In terms of assembly, part of the 30S ribosomal subunit. Forms a bridge to the 50S subunit in the 70S ribosome, contacting the 23S rRNA.

Functionally, one of the primary rRNA binding proteins, it binds directly to 16S rRNA where it helps nucleate assembly of the platform of the 30S subunit by binding and bridging several RNA helices of the 16S rRNA. Its function is as follows. Forms an intersubunit bridge (bridge B4) with the 23S rRNA of the 50S subunit in the ribosome. The polypeptide is Small ribosomal subunit protein uS15 (Desulfosudis oleivorans (strain DSM 6200 / JCM 39069 / Hxd3) (Desulfococcus oleovorans)).